Here is a 351-residue protein sequence, read N- to C-terminus: MQVSDFHFDLPNELIARYPQPERTASRLLQLTGETGNIQHKGFKDVLDLAESGDLFVFNNTRVIPARIFGRKASGGKIEVLVERILDDKSILAHVRASKSPKPGNELLLGENDDYQAEMIARHDTLFEIRFNSDKTVLEILEEVGHMPLPPYIDRPDEDADKERYQTVYNAKPGAVAAPTAGLHFDDKLMAALKAKGVNFAFVTLHVGAGTFQPVRVDNIDDHHMHSEYVEVPQDVVDAVNATKANGGRIIAVGTTSVRSLESAAQDAVKKGTELVPFFGDTEIFIFPGYEFQLVDVLVTNFHLPESTLIMLVSAFAGYEHTMNAYLQAVDNKYRFFSYGDSMFITRRNNV.

This sequence belongs to the QueA family. In terms of assembly, monomer.

The protein resides in the cytoplasm. It catalyses the reaction 7-aminomethyl-7-carbaguanosine(34) in tRNA + S-adenosyl-L-methionine = epoxyqueuosine(34) in tRNA + adenine + L-methionine + 2 H(+). It functions in the pathway tRNA modification; tRNA-queuosine biosynthesis. In terms of biological role, transfers and isomerizes the ribose moiety from AdoMet to the 7-aminomethyl group of 7-deazaguanine (preQ1-tRNA) to give epoxyqueuosine (oQ-tRNA). The polypeptide is S-adenosylmethionine:tRNA ribosyltransferase-isomerase (Photobacterium profundum (strain SS9)).